The sequence spans 470 residues: 5-hydroxytryptamine receptor 2A (470 aa).

Residues Met-1 to Leu-80 are Extracellular-facing. N-linked (GlcNAc...) asparagine glycosylation is found at Asn-8, Asn-38, Asn-44, Asn-51, Asn-54, and Asn-75. The chain crosses the membrane as a helical span at residues Thr-81 to Met-97. The Cytoplasmic segment spans residues Ala-98–Tyr-111. A helical membrane pass occupies residues Phe-112–Tyr-137. At Gly-138–Lys-146 the chain is on the extracellular side. The chain crosses the membrane as a helical span at residues Leu-147–Leu-171. Cys-148 and Cys-227 are disulfide-bonded. Asp-155 serves as a coordination point for serotonin. Residues Asp-172–Tyr-174 carry the DRY motif; important for ligand-induced conformation changes motif. Residues Asp-172 to Lys-191 are Cytoplasmic-facing. The helical transmembrane segment at Ala-192–Leu-215 threads the bilayer. Topologically, residues Gln-216–Asp-232 are extracellular. Residues Asn-233 to Ile-258 form a helical membrane-spanning segment. Topologically, residues Lys-259–Cys-321 are cytoplasmic. At Ser-280 the chain carries Phosphoserine. A helical transmembrane segment spans residues Lys-322–Ile-347. Asn-342 is a serotonin binding site. Cys-348 and Cys-352 are disulfide-bonded. At Cys-348–Asp-355 the chain is on the extracellular side. A helical transmembrane segment spans residues Val-356–Leu-381. The NPxxY motif; important for ligand-induced conformation changes and signaling motif lies at Asn-375–Tyr-379. At Phe-382 to Val-470 the chain is on the cytoplasmic side. The interval Gly-448–Val-470 is disordered. The span at Asp-458–Val-470 shows a compositional bias: polar residues. The PDZ-binding motif lies at Ser-468 to Val-470.

Belongs to the G-protein coupled receptor 1 family. As to quaternary structure, interacts (via C-terminus) with MPDZ and PATJ. May interact (via C-terminus) with MPP3, PRDX6, DLG4, DLG1, CASK, APBA1 and MAGI2. Interacts with GRM2 and DRD2; this may affect signaling.

Its subcellular location is the cell membrane. It localises to the cell projection. The protein resides in the dendrite. The protein localises to the axon. It is found in the cytoplasmic vesicle. Its subcellular location is the membrane. It localises to the caveola. The protein resides in the presynapse. Its activity is regulated as follows. G-protein coupled receptor activity is regulated by lipids: oleamide increases HTR2A-mediated activity. Functionally, G-protein coupled receptor for 5-hydroxytryptamine (serotonin). Also functions as a receptor for various drugs and psychoactive substances, including mescaline, psilocybin, 1-(2,5-dimethoxy-4-iodophenyl)-2-aminopropane (DOI) and lysergic acid diethylamide (LSD). Ligand binding causes a conformation change that triggers signaling via guanine nucleotide-binding proteins (G proteins) and modulates the activity of downstream effectors. HTR2A is coupled to G(q)/G(11) G alpha proteins and activates phospholipase C-beta, releasing diacylglycerol (DAG) and inositol 1,4,5-trisphosphate (IP3) second messengers that modulate the activity of phosphatidylinositol 3-kinase and promote the release of Ca(2+) ions from intracellular stores, respectively. Beta-arrestin family members inhibit signaling via G proteins and mediate activation of alternative signaling pathways. Affects neural activity, perception, cognition and mood. Plays a role in the regulation of behavior, including responses to anxiogenic situations and psychoactive substances. Plays a role in intestinal smooth muscle contraction, and may play a role in arterial vasoconstriction. In Sus scrofa (Pig), this protein is 5-hydroxytryptamine receptor 2A (HTR2A).